The primary structure comprises 69 residues: Conotoxin Lt5.10 (69 aa).

A signal peptide spans 1 to 19; sequence MLCLPVFIILLLLASPAAP. Positions 20 to 54 are excised as a propeptide; that stretch reads KSLETRIQNDLIRAGLTDADLKTEKGFLSGLLNVA.

The protein belongs to the conotoxin T superfamily. Contains 2 disulfide bonds that can be either 'C1-C3, C2-C4' or 'C1-C4, C2-C3', since these disulfide connectivities have been observed for conotoxins with cysteine framework V (for examples, see AC P0DQQ7 and AC P81755). Expressed by the venom duct.

The protein localises to the secreted. The sequence is that of Conotoxin Lt5.10 from Conus litteratus (Lettered cone).